Here is a 959-residue protein sequence, read N- to C-terminus: Translation initiation factor IF-2 (959 aa).

Over residues 1–10 the composition is skewed to basic and acidic residues; that stretch reads MSDKTNDDKT. The interval 1 to 374 is disordered; the sequence is MSDKTNDDKT…SQMQETREKI (374 aa). Positions 27–37 are enriched in polar residues; that stretch reads EQSTVRQNFSH. Low complexity-rich tracts occupy residues 63-118 and 128-138; these read AAAA…VTKP and QRPGGQQAQRP. 2 stretches are compositionally biased toward basic and acidic residues: residues 154–225 and 232–241; these read SEMD…EAAK and ARSERRDDAR. Positions 246 to 284 are enriched in low complexity; the sequence is GARPQQAGRPQGGRPQPAGRPQQGSPRPAPIIADAAPIA. Over residues 318 to 333 the composition is skewed to basic and acidic residues; sequence PEVRAPKVVKGEDDRR. Residues 457 to 626 form the tr-type G domain; it reads SRPPVVTIMG…LLQAEMLDLK (170 aa). The tract at residues 466–473 is G1; it reads GHVDHGKT. 466-473 contributes to the GTP binding site; it reads GHVDHGKT. The G2 stretch occupies residues 491–495; it reads GITQH. The interval 512-515 is G3; it reads DTPG. Residues 512–516 and 566–569 each bind GTP; these read DTPGH and NKID. Residues 566-569 are G4; the sequence is NKID. A G5 region spans residues 602–604; the sequence is SAK.

This sequence belongs to the TRAFAC class translation factor GTPase superfamily. Classic translation factor GTPase family. IF-2 subfamily.

It is found in the cytoplasm. One of the essential components for the initiation of protein synthesis. Protects formylmethionyl-tRNA from spontaneous hydrolysis and promotes its binding to the 30S ribosomal subunits. Also involved in the hydrolysis of GTP during the formation of the 70S ribosomal complex. The protein is Translation initiation factor IF-2 of Brucella abortus (strain 2308).